Reading from the N-terminus, the 1296-residue chain is Phosphoribosylformylglycinamidine synthase (1296 aa).

Residues 304–323 form a disordered region; it reads WPGAATGSGGEIRDEGATGR. Residues 306–317 and Ala-677 contribute to the ATP site; that span reads GAATGSGGEIRD. Residues Asp-678, Glu-717, Asn-721, and Asp-885 each coordinate Mg(2+). Ser-887 lines the ATP pocket. The span at 1000–1013 shows a compositional bias: basic and acidic residues; sequence PDCADQEHQAKQDE. Residues 1000-1019 are disordered; that stretch reads PDCADQEHQAKQDESDPGLN. Positions 1043 to 1296 constitute a Glutamine amidotransferase type-1 domain; the sequence is VAVLREQGVN…MFRNARKQLG (254 aa). Cys-1136 functions as the Nucleophile in the catalytic mechanism. Catalysis depends on residues His-1261 and Glu-1263.

It in the N-terminal section; belongs to the FGAMS family. As to quaternary structure, monomer.

Its subcellular location is the cytoplasm. It catalyses the reaction N(2)-formyl-N(1)-(5-phospho-beta-D-ribosyl)glycinamide + L-glutamine + ATP + H2O = 2-formamido-N(1)-(5-O-phospho-beta-D-ribosyl)acetamidine + L-glutamate + ADP + phosphate + H(+). The protein operates within purine metabolism; IMP biosynthesis via de novo pathway; 5-amino-1-(5-phospho-D-ribosyl)imidazole from N(2)-formyl-N(1)-(5-phospho-D-ribosyl)glycinamide: step 1/2. Phosphoribosylformylglycinamidine synthase involved in the purines biosynthetic pathway. Catalyzes the ATP-dependent conversion of formylglycinamide ribonucleotide (FGAR) and glutamine to yield formylglycinamidine ribonucleotide (FGAM) and glutamate. The sequence is that of Phosphoribosylformylglycinamidine synthase from Yersinia pestis bv. Antiqua (strain Nepal516).